Here is a 272-residue protein sequence, read N- to C-terminus: uncharacterized protein (272 aa).

Residues 12 to 34 (FITGAARGLGRAHAVRLAADGAN), 39 to 40 (DI), 77 to 78 (DV), and asparagine 104 each bind NAD(+). Serine 153 contributes to the substrate binding site. Catalysis depends on tyrosine 170, which acts as the Proton acceptor. NAD(+)-binding positions include lysine 174 and 203-205 (VDT).

This sequence belongs to the short-chain dehydrogenases/reductases (SDR) family.

This is an uncharacterized protein from Mycobacterium tuberculosis (strain CDC 1551 / Oshkosh).